A 1295-amino-acid polypeptide reads, in one-letter code: Phosphoribosylformylglycinamidine synthase (1295 aa).

A disordered region spans residues 305–327 (WPGAATGSGGEIRDEGATGRGAK). ATP contacts are provided by residues 307 to 318 (GAATGSGGEIRD) and Ala-678. Glu-718, Asn-722, and Asp-884 together coordinate Mg(2+). Position 886 (Ser-886) interacts with ATP. The Glutamine amidotransferase type-1 domain occupies 1042 to 1295 (VAVLREQGVN…IFRNARKQLG (254 aa)). Cys-1135 functions as the Nucleophile in the catalytic mechanism. Residues His-1260 and Glu-1262 contribute to the active site.

In the N-terminal section; belongs to the FGAMS family. As to quaternary structure, monomer. Post-translationally, both N-terminus methionine truncation and retention have been observed for this protein.

The protein resides in the cytoplasm. It catalyses the reaction N(2)-formyl-N(1)-(5-phospho-beta-D-ribosyl)glycinamide + L-glutamine + ATP + H2O = 2-formamido-N(1)-(5-O-phospho-beta-D-ribosyl)acetamidine + L-glutamate + ADP + phosphate + H(+). The protein operates within purine metabolism; IMP biosynthesis via de novo pathway; 5-amino-1-(5-phospho-D-ribosyl)imidazole from N(2)-formyl-N(1)-(5-phospho-D-ribosyl)glycinamide: step 1/2. Phosphoribosylformylglycinamidine synthase involved in the purines biosynthetic pathway. Catalyzes the ATP-dependent conversion of formylglycinamide ribonucleotide (FGAR) and glutamine to yield formylglycinamidine ribonucleotide (FGAM) and glutamate. This chain is Phosphoribosylformylglycinamidine synthase, found in Escherichia coli (strain K12).